The chain runs to 159 residues: Ankyrin repeat domain-containing protein 37 (159 aa).

ANK repeat units lie at residues 1–25 (MLLLSCNLEEDDLKSLLETGASVNA), 30–59 (QEQSPAHLAAGGGLACFLLWQLQTGADLNQ), and 63–92 (LGETPLHKAAKVGSLDCLSLLVASDVQIGV). A Nuclear localization signal motif is present at residues 130–150 (EQQERDPRAPVLRQKRSFRTV).

Ubiquitinated by the CRL2(FEM1B) complex, leading to its degradation. In terms of tissue distribution, expressed testis, ovary, uterus, kidney, liver, but not in other tissues.

The protein localises to the nucleus. Its subcellular location is the cytoplasm. The protein is Ankyrin repeat domain-containing protein 37 of Mus musculus (Mouse).